Here is a 442-residue protein sequence, read N- to C-terminus: Probable carboxypeptidase PAAG_00768 (442 aa).

The first 20 residues, 1–20 (MKLQYLVALLFVQAVPPVTA), serve as a signal peptide directing secretion. Asparagine 102 is a glycosylation site (N-linked (GlcNAc...) asparagine). Aspartate 160 is a Zn(2+) binding site. Glutamate 192 serves as the catalytic Proton acceptor. Glutamate 193 is a Zn(2+) binding site. A glycan (N-linked (GlcNAc...) asparagine) is linked at asparagine 343.

Belongs to the peptidase M20A family. Zn(2+) is required as a cofactor.

Its subcellular location is the secreted. In Paracoccidioides lutzii (strain ATCC MYA-826 / Pb01) (Paracoccidioides brasiliensis), this protein is Probable carboxypeptidase PAAG_00768.